The primary structure comprises 159 residues: Ribosomal RNA large subunit methyltransferase H (159 aa).

Residues Leu-76, Gly-108, and 127 to 132 each bind S-adenosyl-L-methionine; that span reads FGLLTF.

The protein belongs to the RNA methyltransferase RlmH family. As to quaternary structure, homodimer.

It localises to the cytoplasm. It catalyses the reaction pseudouridine(1915) in 23S rRNA + S-adenosyl-L-methionine = N(3)-methylpseudouridine(1915) in 23S rRNA + S-adenosyl-L-homocysteine + H(+). Functionally, specifically methylates the pseudouridine at position 1915 (m3Psi1915) in 23S rRNA. The polypeptide is Ribosomal RNA large subunit methyltransferase H (Streptococcus thermophilus (strain CNRZ 1066)).